A 66-amino-acid polypeptide reads, in one-letter code: Large ribosomal subunit protein bL35 (66 aa).

Residues 1–26 are compositionally biased toward basic residues; the sequence is MPKMKTHRGSAKRFKKTASGKLKRGH. Positions 1–29 are disordered; the sequence is MPKMKTHRGSAKRFKKTASGKLKRGHAYT.

This sequence belongs to the bacterial ribosomal protein bL35 family.

In Geobacillus kaustophilus (strain HTA426), this protein is Large ribosomal subunit protein bL35.